The chain runs to 653 residues: NADH-quinone oxidoreductase subunit L (653 aa).

The next 17 membrane-spanning stretches (helical) occupy residues 8-28 (IMII…LNRI), 35-55 (IIAI…FCDA), 89-109 (IMFI…LGYM), 115-135 (IIRF…LVSA), 138-158 (FLQL…LIGF), 178-198 (VSDF…GSAN), 214-234 (ILVH…GCIG), 253-273 (TPVS…FLVA), 285-305 (VLQF…SIAI), 313-333 (IIAY…GVSS), 336-356 (SAIF…LSAG), 377-397 (MPIT…IYPL), 418-438 (FIFG…IIIL), 465-485 (LILL…LLSM), 511-531 (LYIK…GICL), 577-597 (EIYN…FYLG), and 629-649 (IFNY…YFVW).

This sequence belongs to the complex I subunit 5 family.

It localises to the cell membrane. It catalyses the reaction a quinone + NADH + 5 H(+)(in) = a quinol + NAD(+) + 4 H(+)(out). In terms of biological role, NDH-1 shuttles electrons from NADH, via FMN and iron-sulfur (Fe-S) centers, to quinones in the respiratory chain. Couples the redox reaction to proton translocation (for every two electrons transferred, four hydrogen ions are translocated across the cytoplasmic membrane), and thus conserves the redox energy in a proton gradient. This is NADH-quinone oxidoreductase subunit L (nuoL) from Rickettsia typhi (strain ATCC VR-144 / Wilmington).